A 348-amino-acid polypeptide reads, in one-letter code: 3-isopropylmalate dehydrogenase (348 aa).

Residue 76-87 coordinates NAD(+); the sequence is GPKWTDPNNRPE. 4 residues coordinate substrate: arginine 94, arginine 104, arginine 132, and aspartate 217. Aspartate 217, aspartate 241, and aspartate 245 together coordinate Mg(2+). 275–287 serves as a coordination point for NAD(+); the sequence is GSAPDIAGKNVAN.

It belongs to the isocitrate and isopropylmalate dehydrogenases family. LeuB type 1 subfamily. Homodimer. It depends on Mg(2+) as a cofactor. Mn(2+) is required as a cofactor.

It localises to the cytoplasm. It carries out the reaction (2R,3S)-3-isopropylmalate + NAD(+) = 4-methyl-2-oxopentanoate + CO2 + NADH. It functions in the pathway amino-acid biosynthesis; L-leucine biosynthesis; L-leucine from 3-methyl-2-oxobutanoate: step 3/4. Its function is as follows. Catalyzes the oxidation of 3-carboxy-2-hydroxy-4-methylpentanoate (3-isopropylmalate) to 3-carboxy-4-methyl-2-oxopentanoate. The product decarboxylates to 4-methyl-2 oxopentanoate. The protein is 3-isopropylmalate dehydrogenase of Staphylococcus aureus (strain MRSA252).